The primary structure comprises 214 residues: Adenylate kinase (214 aa).

10-15 provides a ligand contact to ATP; sequence GAGKGT. The interval 30–59 is NMP; that stretch reads STGDIFRANIKGNTPLGQKAKEYMDKGELV. AMP is bound by residues Thr31, Arg36, 57–59, 85–88, and Gln92; these read ELV and GFPR. The tract at residues 126-163 is LID; sequence GRRVCTNCGATYNVVFNPTKVEGICDVCNSPVIQRADD. An ATP-binding site is contributed by Arg127. Zn(2+) contacts are provided by Cys130 and Cys133. Residue 136–137 participates in ATP binding; the sequence is TY. Positions 150 and 153 each coordinate Zn(2+). The AMP site is built by Arg160 and Arg171. An ATP-binding site is contributed by Gly199.

It belongs to the adenylate kinase family. Monomer.

It is found in the cytoplasm. The enzyme catalyses AMP + ATP = 2 ADP. It participates in purine metabolism; AMP biosynthesis via salvage pathway; AMP from ADP: step 1/1. Its function is as follows. Catalyzes the reversible transfer of the terminal phosphate group between ATP and AMP. Plays an important role in cellular energy homeostasis and in adenine nucleotide metabolism. This Ruminiclostridium cellulolyticum (strain ATCC 35319 / DSM 5812 / JCM 6584 / H10) (Clostridium cellulolyticum) protein is Adenylate kinase.